A 258-amino-acid chain; its full sequence is Thiamine thiazole synthase (258 aa).

NAD(+) contacts are provided by residues S36, 55-56 (ER), G63, I127, and 153-155 (HVD). The Fe cation site is built by D155 and H170. Residue M224 participates in NAD(+) binding. Residue R234 coordinates glycine.

It belongs to the THI4 family. In terms of assembly, homooctamer; tetramer of dimers. It depends on Fe(2+) as a cofactor.

The catalysed reaction is hydrogen sulfide + glycine + NAD(+) = ADP-5-ethyl-4-methylthiazole-2-carboxylate + nicotinamide + 3 H2O + H(+). It participates in cofactor biosynthesis; thiamine diphosphate biosynthesis. Its function is as follows. Involved in the biosynthesis of the thiazole moiety of thiamine. Catalyzes the conversion of NAD and glycine to adenosine diphosphate 5-(2-hydroxyethyl)-4-methylthiazole-2-carboxylate (ADT), an adenylated thiazole intermediate, using free sulfide as a source of sulfur. The chain is Thiamine thiazole synthase from Methanothermobacter thermautotrophicus (strain ATCC 29096 / DSM 1053 / JCM 10044 / NBRC 100330 / Delta H) (Methanobacterium thermoautotrophicum).